The chain runs to 435 residues: Methylenetetrahydrofolate--tRNA-(uracil-5-)-methyltransferase TrmFO (435 aa).

9 to 14 serves as a coordination point for FAD; the sequence is GAGLAG.

Belongs to the MnmG family. TrmFO subfamily. It depends on FAD as a cofactor.

The protein resides in the cytoplasm. The enzyme catalyses uridine(54) in tRNA + (6R)-5,10-methylene-5,6,7,8-tetrahydrofolate + NADH + H(+) = 5-methyluridine(54) in tRNA + (6S)-5,6,7,8-tetrahydrofolate + NAD(+). It catalyses the reaction uridine(54) in tRNA + (6R)-5,10-methylene-5,6,7,8-tetrahydrofolate + NADPH + H(+) = 5-methyluridine(54) in tRNA + (6S)-5,6,7,8-tetrahydrofolate + NADP(+). Functionally, catalyzes the folate-dependent formation of 5-methyl-uridine at position 54 (M-5-U54) in all tRNAs. The protein is Methylenetetrahydrofolate--tRNA-(uracil-5-)-methyltransferase TrmFO of Enterococcus faecalis (strain ATCC 700802 / V583).